The following is a 106-amino-acid chain: MGNNNDWLNFEHLAEEKQIDAVKPPSMYKVILNNDDYTPMEFVIDVLQKFFSYDIERATQLMLTVHYQGKAICGVFTAEVAETKVVHVNRYARENEHPLLCTLEKA.

Belongs to the ClpS family. In terms of assembly, binds to the N-terminal domain of the chaperone ClpA.

Its function is as follows. Involved in the modulation of the specificity of the ClpAP-mediated ATP-dependent protein degradation. This Serratia proteamaculans (strain 568) protein is ATP-dependent Clp protease adapter protein ClpS.